The following is a 543-amino-acid chain: Chaperonin GroEL (543 aa).

Residues 29–32, 86–90, glycine 413, 476–478, and aspartate 492 each bind ATP; these read TLGP, DGTTT, and NAA.

This sequence belongs to the chaperonin (HSP60) family. Forms a cylinder of 14 subunits composed of two heptameric rings stacked back-to-back. Interacts with the co-chaperonin GroES.

It localises to the cytoplasm. The catalysed reaction is ATP + H2O + a folded polypeptide = ADP + phosphate + an unfolded polypeptide.. Functionally, together with its co-chaperonin GroES, plays an essential role in assisting protein folding. The GroEL-GroES system forms a nano-cage that allows encapsulation of the non-native substrate proteins and provides a physical environment optimized to promote and accelerate protein folding. This is Chaperonin GroEL from Brevibacillus choshinensis.